The sequence spans 287 residues: Cbb3-type cytochrome c oxidase subunit FixP (287 aa).

Over 1–33 the chain is Cytoplasmic; sequence MSQKHIDELSGVETTGHEWDGIQELNNPMPRWW. A helical membrane pass occupies residues 34–54; sequence IWTFYVTILWAIGYAIAYPAI. Topologically, residues 55–287 are periplasmic; that stretch reads PMITSATNGY…IFVHALGGGT (233 aa). 2 Cytochrome c domains span residues 108–196 and 203–284; these read FAIA…WGLT and GLAA…HALG. Cysteine 121, cysteine 124, histidine 125, methionine 173, cysteine 216, cysteine 219, histidine 220, and methionine 261 together coordinate heme c.

This sequence belongs to the CcoP / FixP family. Component of the cbb3-type cytochrome c oxidase at least composed of FixN, FixO, FixQ and FixP. The cofactor is heme c.

The protein localises to the cell inner membrane. Its pathway is energy metabolism; oxidative phosphorylation. Functionally, C-type cytochrome. Part of the cbb3-type cytochrome c oxidase complex. FixP subunit is required for transferring electrons from donor cytochrome c via its heme groups to FixO subunit. From there, electrons are shuttled to the catalytic binuclear center of FixN subunit where oxygen reduction takes place. The complex also functions as a proton pump. This Rhizobium etli (strain ATCC 51251 / DSM 11541 / JCM 21823 / NBRC 15573 / CFN 42) protein is Cbb3-type cytochrome c oxidase subunit FixP.